The chain runs to 113 residues: UPF0122 protein LAF_1235 (113 aa).

This sequence belongs to the UPF0122 family.

In terms of biological role, might take part in the signal recognition particle (SRP) pathway. This is inferred from the conservation of its genetic proximity to ftsY/ffh. May be a regulatory protein. This Limosilactobacillus fermentum (strain NBRC 3956 / LMG 18251) (Lactobacillus fermentum) protein is UPF0122 protein LAF_1235.